Here is a 615-residue protein sequence, read N- to C-terminus: uncharacterized protein (615 aa).

It belongs to the mycobacterial PPE family.

This is an uncharacterized protein from Mycobacterium tuberculosis (strain CDC 1551 / Oshkosh).